The chain runs to 90 residues: U-scoloptoxin(15)-Sa3a (90 aa).

A signal peptide spans 1–18 (MKMVYLGLFLIITSCVIS).

This sequence belongs to the scoloptoxin-15 family. In terms of processing, contains 3 disulfide bonds. Expressed by the venom gland.

The protein resides in the secreted. This chain is U-scoloptoxin(15)-Sa3a, found in Scolopendra alternans (Florida Keys giant centipede).